A 441-amino-acid polypeptide reads, in one-letter code: Chitinase-like protein Idgf3 (441 aa).

Residues 1–23 (MSGSLWLSLALSLAVLAQFKVSA) form the signal peptide. Positions 25–441 (PNLVCFYDSQ…MLRAIKYRLL (417 aa)) constitute a GH18 domain. C29 and C56 are joined by a disulfide. N221 carries an N-linked (GlcNAc...) asparagine glycan. Positions 310–331 (GDSGMPVVSSTQGPAPAGPQSK) are disordered. A disulfide bridge connects residues C342 and C425.

Belongs to the glycosyl hydrolase 18 family. IDGF subfamily. In terms of processing, glycosylated.

The protein localises to the secreted. Functionally, cooperates with insulin-like peptides to stimulate the proliferation, polarization and motility of imaginal disk cells. May act by stabilizing the binding of insulin-like peptides to its receptor through a simultaneous interaction with both molecules to form a multiprotein signaling complex. The polypeptide is Chitinase-like protein Idgf3 (Idgf3) (Drosophila simulans (Fruit fly)).